The sequence spans 85 residues: uncharacterized protein (85 aa).

An N-terminal signal peptide occupies residues Met1–Ser20.

This is an uncharacterized protein from Invertebrate iridescent virus 6 (IIV-6).